A 281-amino-acid polypeptide reads, in one-letter code: Bidirectional sugar transporter SWEET14 (281 aa).

Over Met-1–Asn-6 the chain is Extracellular. The helical transmembrane segment at Val-7–Pro-27 threads the bilayer. A MtN3/slv 1 domain is found at Thr-11–Lys-97. Topologically, residues Val-28–Gly-42 are cytoplasmic. Residues Phe-43–Leu-63 form a helical membrane-spanning segment. Residues Gln-64–Phe-70 are Extracellular-facing. The helical transmembrane segment at Leu-71–Ile-91 threads the bilayer. The Cytoplasmic segment spans residues Thr-92–Lys-104. A helical membrane pass occupies residues Val-105–Thr-125. Topologically, residues Lys-126 to Lys-132 are extracellular. A helical transmembrane segment spans residues Val-133 to Met-153. Residues Val-133–Tyr-216 enclose the MtN3/slv 2 domain. The Cytoplasmic segment spans residues Arg-154–Pro-166. The helical transmembrane segment at Phe-167–Ile-187 threads the bilayer. The Extracellular portion of the chain corresponds to Lys-188–Val-192. The chain crosses the membrane as a helical span at residues Ala-193–Phe-213. The Cytoplasmic portion of the chain corresponds to Lys-214–Asn-281. The segment covering Thr-244–Asp-259 has biased composition (polar residues). Residues Thr-244–Asn-281 form a disordered region. A compositionally biased stretch (basic and acidic residues) spans His-267–Asn-281.

Belongs to the SWEET sugar transporter family. In terms of assembly, forms homooligomers and/or heterooligomers.

Its subcellular location is the cell membrane. In terms of biological role, mediates both low-affinity uptake and efflux of sugar across the plasma membrane. This chain is Bidirectional sugar transporter SWEET14, found in Arabidopsis thaliana (Mouse-ear cress).